Reading from the N-terminus, the 217-residue chain is UPF0323 lipoprotein HPSH_01205 (217 aa).

A signal peptide spans 1–27 (MKKPYRKISDYAIVGGLSALVMVSIVG). C28 carries the N-palmitoyl cysteine lipid modification. A lipid anchor (S-diacylglycerol cysteine) is attached at C28. Positions 160–171 (QRTYKSPQAYQR) are enriched in polar residues. A disordered region spans residues 160–217 (QRTYKSPQAYQRSQNSFSKSAPSASSMGGASKGQSGFFGSSRPTSSPAVSSGTRGFNS). Low complexity predominate over residues 172-210 (SQNSFSKSAPSASSMGGASKGQSGFFGSSRPTSSPAVSS).

The protein belongs to the UPF0323 family.

The protein resides in the cell membrane. This is UPF0323 lipoprotein HPSH_01205 from Helicobacter pylori (strain Shi470).